The primary structure comprises 327 residues: Phenylalanine--tRNA ligase alpha subunit (327 aa).

Glu-252 is a binding site for Mg(2+).

The protein belongs to the class-II aminoacyl-tRNA synthetase family. Phe-tRNA synthetase alpha subunit type 1 subfamily. Tetramer of two alpha and two beta subunits. Requires Mg(2+) as cofactor.

Its subcellular location is the cytoplasm. The enzyme catalyses tRNA(Phe) + L-phenylalanine + ATP = L-phenylalanyl-tRNA(Phe) + AMP + diphosphate + H(+). In Shewanella sp. (strain MR-7), this protein is Phenylalanine--tRNA ligase alpha subunit.